Here is a 288-residue protein sequence, read N- to C-terminus: Bifunctional protein FolD (288 aa).

NADP(+)-binding positions include 166-168 (GRS), Ser191, and Val232.

Belongs to the tetrahydrofolate dehydrogenase/cyclohydrolase family. In terms of assembly, homodimer.

The enzyme catalyses (6R)-5,10-methylene-5,6,7,8-tetrahydrofolate + NADP(+) = (6R)-5,10-methenyltetrahydrofolate + NADPH. It catalyses the reaction (6R)-5,10-methenyltetrahydrofolate + H2O = (6R)-10-formyltetrahydrofolate + H(+). The protein operates within one-carbon metabolism; tetrahydrofolate interconversion. Catalyzes the oxidation of 5,10-methylenetetrahydrofolate to 5,10-methenyltetrahydrofolate and then the hydrolysis of 5,10-methenyltetrahydrofolate to 10-formyltetrahydrofolate. In Roseiflexus castenholzii (strain DSM 13941 / HLO8), this protein is Bifunctional protein FolD.